The chain runs to 165 residues: Group 10 secretory phospholipase A2 (165 aa).

Positions 1 to 31 are cleaved as a signal peptide; that stretch reads MGPLPVCLPIMLLLLLPSLLLLLLLPGPGSG. A propeptide spanning residues 32-42 is cleaved from the precursor; sequence EASRILRVHRR. 8 disulfides stabilise this stretch: C53-C111, C67-C157, C69-C85, C84-C139, C90-C164, C91-C132, C100-C125, and C118-C130. Ca(2+)-binding residues include F68, G70, and G72. Residue H88 is part of the active site. Residue D89 participates in Ca(2+) binding. A glycan (N-linked (GlcNAc...) asparagine) is linked at N113. D133 is a catalytic residue.

This sequence belongs to the phospholipase A2 family. As to quaternary structure, interacts with PLA2R1; this interaction mediates PLA2G10 clearance and inactivation. Requires Ca(2+) as cofactor. Found in spleen, thymus, peripheral blood leukocytes, pancreas, lung, and colon. Expressed in neuronal fibers in dorsal root ganglia and in peripheral tissues including stomach, white adipose tissue and prostate (at protein level).

Its subcellular location is the secreted. The protein resides in the lysosome. It localises to the cytoplasmic vesicle. The protein localises to the secretory vesicle. It is found in the acrosome. It catalyses the reaction a 1,2-diacyl-sn-glycero-3-phosphocholine + H2O = a 1-acyl-sn-glycero-3-phosphocholine + a fatty acid + H(+). It carries out the reaction 1-hexadecanoyl-2-(9Z-octadecenoyl)-sn-glycero-3-phosphocholine + H2O = 1-hexadecanoyl-sn-glycero-3-phosphocholine + (9Z)-octadecenoate + H(+). The enzyme catalyses 1-octadecanoyl-2-(5Z,8Z,11Z,14Z-eicosatetraenoyl)-sn-glycero-3-phosphocholine + H2O = 1-octadecanoyl-sn-glycero-3-phosphocholine + (5Z,8Z,11Z,14Z)-eicosatetraenoate + H(+). The catalysed reaction is 1,2-dihexadecanoyl-sn-glycero-3-phosphocholine + H2O = 1-hexadecanoyl-sn-glycero-3-phosphocholine + hexadecanoate + H(+). It catalyses the reaction 1-hexadecanoyl-2-(9Z-octadecenoyl)-sn-glycero-3-phosphoglycerol + H2O = 1-hexadecanoyl-sn-glycero-3-phosphoglycerol + (9Z)-octadecenoate + H(+). It carries out the reaction 1,2-dihexadecanoyl-sn-glycero-3-phospho-(1'-sn-glycerol) + H2O = 1-hexadecanoyl-sn-glycero-3-phospho-(1'-sn-glycerol) + hexadecanoate + H(+). The enzyme catalyses 1-hexadecanoyl-2-(9Z-octadecenoyl)-sn-glycero-3-phospho-L-serine + H2O = 1-hexadecanoyl-sn-glycero-3-phospho-L-serine + (9Z)-octadecenoate + H(+). The catalysed reaction is 1-hexadecanoyl-2-(9Z,12Z-octadecadienoyl)-sn-glycero-3-phosphoethanolamine + H2O = 1-hexadecanoyl-sn-glycero-3-phosphoethanolamine + (9Z,12Z)-octadecadienoate + H(+). It catalyses the reaction 1-hexadecanoyl-2-(9Z-octadecenoyl)-sn-glycero-3-phosphate + H2O = 1-hexadecanoyl-sn-glycero-3-phosphate + (9Z)-octadecenoate + H(+). It carries out the reaction 1-O-hexadecyl-2-acetyl-sn-glycero-3-phosphocholine + H2O = 1-O-hexadecyl-sn-glycero-3-phosphocholine + acetate + H(+). Inhibited by methyl indoxam. Functionally, secretory calcium-dependent phospholipase A2 that primarily targets extracellular phospholipids. Hydrolyzes the ester bond of the fatty acyl group attached at sn-2 position of phospholipids with preference for phosphatidylcholines and phosphatidylglycerols over phosphatidylethanolamines. Preferentially releases sn-2 omega-6 and omega-3 polyunsaturated fatty acyl (PUFA) chains over saturated fatty acyls. Contributes to phospholipid remodeling of very low-density lipoprotein (VLDL), low-density lipoprotein (LDL) and high-density lipoprotein (HDL) particles. Hydrolyzes LDL phospholipids releasing unsaturated fatty acids that regulate macrophage differentiation toward foam cells. Efficiently hydrolyzes and inactivates platelet activating factor (PAF), a potent lipid mediator present in oxidized LDL. May act in an autocrine and paracrine manner. Secreted by lung epithelium, targets membrane phospholipids of infiltrating eosinophils, releasing arachidonate and boosting eicosanoid and cysteinyl leukotriene synthesis involved in airway inflammatory response. Secreted by gut epithelium, hydrolyzes dietary and biliary phosphatidylcholines in the gastrointestinal lumen. Plays a stem cell regulator role in colon epithelium. Within intracellular compartment, mediates Paneth-like cell differentiation and its stem cell supporting functions by inhibiting the Wnt signaling pathway in intestinal stem cell (ISC). Secreted in the intestinal lumen upon inflammation, acts in an autocrine way and promotes prostaglandin E2 synthesis that stimulates Wnt signaling pathway in ISCs and tissue regeneration. May participate in hair follicle morphogenesis by regulating phosphatidylethanolamines metabolism at the outermost epithelial layer and facilitating melanin synthesis. By releasing lysophosphatidylcholines (LPCs) at sperm acrosome, controls sperm cell capacitation, acrosome reaction and overall fertility. May promote neurite outgrowth in neuron fibers involved in nociception. Contributes to lipid remodeling of cellular membranes and generation of lipid mediators involved in pathogen clearance. Cleaves sn-2 fatty acyl chains of phosphatidylglycerols and phosphatidylethanolamines, which are major components of membrane phospholipids in bacteria. Displays bactericidal activity against Gram-positive bacteria by directly hydrolyzing phospholipids of the bacterial membrane. In pulmonary epithelium, may contribute to host defense response against adenoviral infection. Prevents adenovirus entry into host cells by hydrolyzing host cell plasma membrane, releasing C16:0 LPCs that inhibit virus-mediated membrane fusion and viral infection. Likely prevents adenoviral entry into the endosomes of host cells. May play a role in maturation and activation of innate immune cells including macrophages, group 2 innate lymphoid cells and mast cells. The polypeptide is Group 10 secretory phospholipase A2 (PLA2G10) (Homo sapiens (Human)).